We begin with the raw amino-acid sequence, 393 residues long: Stearoyl-[acyl-carrier-protein] 9-desaturase, chloroplastic (393 aa).

The N-terminal 31 residues, 1 to 31, are a transit peptide targeting the chloroplast; the sequence is MASMVAFRPEAFLCFSPPKTTRSTRSPRISM. The Fe cation site is built by Glu135, Glu173, His176, Glu226, Glu259, and His262.

It belongs to the fatty acid desaturase type 2 family. As to quaternary structure, homodimer. Fe(2+) is required as a cofactor.

It is found in the plastid. It localises to the chloroplast. The catalysed reaction is octadecanoyl-[ACP] + 2 reduced [2Fe-2S]-[ferredoxin] + O2 + 2 H(+) = (9Z)-octadecenoyl-[ACP] + 2 oxidized [2Fe-2S]-[ferredoxin] + 2 H2O. It participates in lipid metabolism; fatty acid metabolism. Functionally, converts stearoyl-ACP to oleoyl-ACP by introduction of a cis double bond between carbons 9 and 10 of the acyl chain. The protein is Stearoyl-[acyl-carrier-protein] 9-desaturase, chloroplastic of Elaeis guineensis var. tenera (Oil palm).